We begin with the raw amino-acid sequence, 248 residues long: Probable transcriptional regulatory protein BRADO1143 (248 aa).

This sequence belongs to the TACO1 family.

It is found in the cytoplasm. The polypeptide is Probable transcriptional regulatory protein BRADO1143 (Bradyrhizobium sp. (strain ORS 278)).